We begin with the raw amino-acid sequence, 435 residues long: 5-hydroxybenzimidazole synthase (435 aa).

Residues Met-95, Tyr-124, His-163, 186-188 (SKG), 227-230 (NGLR), and Glu-266 each bind substrate. His-270 is a binding site for Zn(2+). Tyr-293 contributes to the substrate binding site. His-334 is a Zn(2+) binding site. Positions 410, 413, and 417 each coordinate [4Fe-4S] cluster.

Belongs to the ThiC family. 5-hydroxybenzimidazole synthase subfamily. Homodimer. Requires [4Fe-4S] cluster as cofactor.

The catalysed reaction is 5-amino-1-(5-phospho-beta-D-ribosyl)imidazole + AH2 + S-adenosyl-L-methionine = 5-hydroxybenzimidazole + 5'-deoxyadenosine + formate + L-methionine + A + NH4(+) + phosphate + 2 H(+). Its pathway is cofactor biosynthesis; adenosylcobalamin biosynthesis. Functionally, catalyzes the complex conversion of aminoimidazole ribotide (AIR) to 5-hydroxybenzimidazole (5-HBI) in a radical S-adenosyl-L-methionine (SAM)-dependent reaction. Is thus involved in the anaerobic biosynthesis of dimethylbenzimidazole (DMB), the lower axial ligand of vitamin B12 (cobalamin). This chain is 5-hydroxybenzimidazole synthase, found in Desulfuromonas acetoxidans (strain DSM 684 / 11070).